A 201-amino-acid polypeptide reads, in one-letter code: Recombination protein RecR (201 aa).

The C4-type zinc-finger motif lies at 60 to 75 (CSCCGNVDTIDPCTVC). The Toprim domain maps to 83-178 (SVIIVVEDVA…KITRLAHGVP (96 aa)).

This sequence belongs to the RecR family.

In terms of biological role, may play a role in DNA repair. It seems to be involved in an RecBC-independent recombinational process of DNA repair. It may act with RecF and RecO. The polypeptide is Recombination protein RecR (Sinorhizobium fredii (strain NBRC 101917 / NGR234)).